Here is a 362-residue protein sequence, read N- to C-terminus: Aminomethyltransferase (362 aa).

The protein belongs to the GcvT family. In terms of assembly, the glycine cleavage system is composed of four proteins: P, T, L and H.

The catalysed reaction is N(6)-[(R)-S(8)-aminomethyldihydrolipoyl]-L-lysyl-[protein] + (6S)-5,6,7,8-tetrahydrofolate = N(6)-[(R)-dihydrolipoyl]-L-lysyl-[protein] + (6R)-5,10-methylene-5,6,7,8-tetrahydrofolate + NH4(+). In terms of biological role, the glycine cleavage system catalyzes the degradation of glycine. The polypeptide is Aminomethyltransferase (Chloroherpeton thalassium (strain ATCC 35110 / GB-78)).